The sequence spans 503 residues: Probable cytosol aminopeptidase (503 aa).

Mn(2+) is bound by residues Lys274 and Asp279. Lys286 is an active-site residue. Mn(2+)-binding residues include Asp297, Asp356, and Glu358. Residue Arg360 is part of the active site.

This sequence belongs to the peptidase M17 family. The cofactor is Mn(2+).

Its subcellular location is the cytoplasm. It catalyses the reaction Release of an N-terminal amino acid, Xaa-|-Yaa-, in which Xaa is preferably Leu, but may be other amino acids including Pro although not Arg or Lys, and Yaa may be Pro. Amino acid amides and methyl esters are also readily hydrolyzed, but rates on arylamides are exceedingly low.. It carries out the reaction Release of an N-terminal amino acid, preferentially leucine, but not glutamic or aspartic acids.. Presumably involved in the processing and regular turnover of intracellular proteins. Catalyzes the removal of unsubstituted N-terminal amino acids from various peptides. The polypeptide is Probable cytosol aminopeptidase (Burkholderia pseudomallei (strain 1710b)).